Consider the following 219-residue polypeptide: UPF0502 protein Gura_0277 (219 aa).

This sequence belongs to the UPF0502 family.

This is UPF0502 protein Gura_0277 from Geotalea uraniireducens (strain Rf4) (Geobacter uraniireducens).